Consider the following 99-residue polypeptide: Sec-independent protein translocase protein TatA (99 aa).

A helical membrane pass occupies residues 1–21 (MIGNLKPLEIVLIIAVILLLF). The interval 46 to 99 (AMKKDDAATAAPTTETVADDTVPPQSTTARTIQAAPGDVTSSRPVSEAKPTTQS) is disordered. Positions 53–69 (ATAAPTTETVADDTVPP) are enriched in low complexity. Over residues 84-99 (VTSSRPVSEAKPTTQS) the composition is skewed to polar residues.

It belongs to the TatA/E family. The Tat system comprises two distinct complexes: a TatABC complex, containing multiple copies of TatA, TatB and TatC subunits, and a separate TatA complex, containing only TatA subunits. Substrates initially bind to the TatABC complex, which probably triggers association of the separate TatA complex to form the active translocon.

It localises to the cell membrane. In terms of biological role, part of the twin-arginine translocation (Tat) system that transports large folded proteins containing a characteristic twin-arginine motif in their signal peptide across membranes. TatA could form the protein-conducting channel of the Tat system. This Streptomyces griseus subsp. griseus (strain JCM 4626 / CBS 651.72 / NBRC 13350 / KCC S-0626 / ISP 5235) protein is Sec-independent protein translocase protein TatA.